A 431-amino-acid polypeptide reads, in one-letter code: Histidine--tRNA ligase (431 aa).

The protein belongs to the class-II aminoacyl-tRNA synthetase family.

It is found in the cytoplasm. The catalysed reaction is tRNA(His) + L-histidine + ATP = L-histidyl-tRNA(His) + AMP + diphosphate + H(+). This is Histidine--tRNA ligase (hisS) from Pyrococcus horikoshii (strain ATCC 700860 / DSM 12428 / JCM 9974 / NBRC 100139 / OT-3).